Here is a 427-residue protein sequence, read N- to C-terminus: 3-isopropylmalate dehydratase large subunit (427 aa).

The [4Fe-4S] cluster site is built by Cys308, Cys368, and Cys371.

This sequence belongs to the aconitase/IPM isomerase family. LeuC type 2 subfamily. Heterodimer of LeuC and LeuD. [4Fe-4S] cluster serves as cofactor.

It catalyses the reaction (2R,3S)-3-isopropylmalate = (2S)-2-isopropylmalate. It participates in amino-acid biosynthesis; L-leucine biosynthesis; L-leucine from 3-methyl-2-oxobutanoate: step 2/4. In terms of biological role, catalyzes the isomerization between 2-isopropylmalate and 3-isopropylmalate, via the formation of 2-isopropylmaleate. In Geobacter sulfurreducens (strain ATCC 51573 / DSM 12127 / PCA), this protein is 3-isopropylmalate dehydratase large subunit.